We begin with the raw amino-acid sequence, 1059 residues long: MQVRKRRGLLDVSTAVLVGILAGFLGVVLAASGVLSFGKEASSKGDSSLETVLALSFEGTTEGVVPFGKDVVLTASQDVAADGEYSLKVENRTSPWDGVEIDLTGKVKSGADYLLSFQVYQSSDAPQLFNVVARTEDEKGERYDVILDKVVVSDHWKEILVPFSPTFEGTPAKYSLIIVASKNTNFNFYLDKVQVLAPKESGPKVIYETSFENGVGDWQPRGDVNIEASSEVAHSGKSSLFISNRQKGWQGAQINLKGILKTGKTYAFEAWVYQNSGQDQTIIMTMQRKYSSDASTQYEWIKSATVPSGQWVQLSGTYTIPAGVTVEDLTLYFESQNPTLEFYVDDVKIVDTTSAEIKIEMEPEKEIPALKEVLKDYFKVGVALPSKVFLNPKDIELITKHFNSITAENEMKPESLLAGIENGKLKFRFETADKYIQFVEENGMVIRGHTLVWHNQTPDWFFKDENGNLLSKEAMTERLKEYIHTVVGHFKGKVYAWDVVNEAVDPNQPDGLRRSTWYQIMGPDYIELAFKFAREADPDAKLFYNDYNTFEPRKRDIIYNLVKDLKEKGLIDGIGMQCHISLATDIKQIEEAIKKFSTIPGIEIHITELDMSVYRDSSSNYPEAPRTALIEQAHKMMQLFEIFKKYSNVITNVTFWGLKDDYSWRATRRNDWPLIFDKDHQAKLAYWAIVAPEVLPPLPKESRISEGEAVVVGMMDDSYLMSKPIEILDEEGNVKATIRAVWKDSTIYIYGEVQDKTKKPAEDGVAIFINPNNERTPYLQPDDTYAVLWTNWKTEVNREDVQVKKFVGPGFRRYSFEMSITIPGVEFKKDSYIGFDAAVIDDGKWYSWSDTTNSQKTNTMNYGTLKLEGIMVATAKYGTPVIDGEIDEIWNTTEEIETKAVAMGSLDKNATAKVRVLWDENYLYVLAIVKDPVLNKDNSNPWEQDSVEIFIDENNHKTGYYEDDDAQFRVNYMNEQTFGTGGSPARFKTAVKLIEGGYIVEAAIKWKTIKPTPNTVIGFNIQVNDANEKGQRVGIISWSDPTNNSWRDPSKFGNLRLIK.

A signal peptide spans 1-30; it reads MQVRKRRGLLDVSTAVLVGILAGFLGVVLA. The tract at residues 47-199 is A-1; it reads SSLETVLALS…LDKVQVLAPK (153 aa). The segment at 200–354 is A-2; sequence ESGPKVIYET…DDVKIVDTTS (155 aa). Positions 364-692 constitute a GH10 domain; the sequence is EKEIPALKEV…KLAYWAIVAP (329 aa). Catalysis depends on Glu502, which acts as the Proton donor. The active-site Nucleophile is Glu608. 2 consecutive CBM-cenC domains span residues 700–870 and 871–1059; these read KESR…LEGI and MVAT…RLIK.

Belongs to the glycosyl hydrolase 10 (cellulase F) family.

It carries out the reaction Endohydrolysis of (1-&gt;4)-beta-D-xylosidic linkages in xylans.. In Thermotoga maritima (strain ATCC 43589 / DSM 3109 / JCM 10099 / NBRC 100826 / MSB8), this protein is Endo-1,4-beta-xylanase A (xynA).